Consider the following 100-residue polypeptide: Flagellar transcriptional regulator FlhD (100 aa).

The protein belongs to the FlhD family. As to quaternary structure, homodimer; disulfide-linked. Forms a heterohexamer composed of two FlhC and four FlhD subunits. Each FlhC binds a FlhD dimer, forming a heterotrimer, and a hexamer assembles by dimerization of two heterotrimers.

Its subcellular location is the cytoplasm. In terms of biological role, functions in complex with FlhC as a master transcriptional regulator that regulates transcription of several flagellar and non-flagellar operons by binding to their promoter region. Activates expression of class 2 flagellar genes, including fliA, which is a flagellum-specific sigma factor that turns on the class 3 genes. Also regulates genes whose products function in a variety of physiological pathways. This Ralstonia pickettii (strain 12D) protein is Flagellar transcriptional regulator FlhD.